We begin with the raw amino-acid sequence, 479 residues long: Cobyric acid synthase (479 aa).

The GATase cobBQ-type domain occupies 250-442 (TRTVAVVAYP…LHGLFEDAAA (193 aa)). The active-site Nucleophile is the Cys-331. His-434 is an active-site residue.

It belongs to the CobB/CobQ family. CobQ subfamily.

The protein operates within cofactor biosynthesis; adenosylcobalamin biosynthesis. In terms of biological role, catalyzes amidations at positions B, D, E, and G on adenosylcobyrinic A,C-diamide. NH(2) groups are provided by glutamine, and one molecule of ATP is hydrogenolyzed for each amidation. This chain is Cobyric acid synthase, found in Variovorax paradoxus (strain S110).